Reading from the N-terminus, the 130-residue chain is MVKIQNYGTGRRKSSSARVFLRSGDGEITVNKRSLKDYFGRETSCMVVRQPLELVDMMNNFNIYITVKGGGVSGQAGAIRQGITRALIKYNHLLRSELRKSGFVTRDSRQVERKKVGFRKSRKRTQFSKR.

The span at 105 to 115 (TRDSRQVERKK) shows a compositional bias: basic and acidic residues. Residues 105-130 (TRDSRQVERKKVGFRKSRKRTQFSKR) are disordered. Residues 116 to 130 (VGFRKSRKRTQFSKR) show a composition bias toward basic residues.

It belongs to the universal ribosomal protein uS9 family.

This chain is Small ribosomal subunit protein uS9, found in Buchnera aphidicola subsp. Schizaphis graminum (strain Sg).